The following is an 867-amino-acid chain: Translation initiation factor IF-2 (867 aa).

The 168-residue stretch at 367–534 folds into the tr-type G domain; it reads TRAPVVTIMG…AILLQSEILE (168 aa). A G1 region spans residues 376 to 383; sequence GHVDHGKT. Residue 376–383 participates in GTP binding; sequence GHVDHGKT. The segment at 401 to 405 is G2; it reads GITQN. A G3 region spans residues 422-425; the sequence is DTPG. GTP-binding positions include 422-426 and 476-479; these read DTPGH and NKID. Positions 476–479 are G4; it reads NKID. Residues 512–514 form a G5 region; that stretch reads SAK.

The protein belongs to the TRAFAC class translation factor GTPase superfamily. Classic translation factor GTPase family. IF-2 subfamily.

The protein localises to the cytoplasm. In terms of biological role, one of the essential components for the initiation of protein synthesis. Protects formylmethionyl-tRNA from spontaneous hydrolysis and promotes its binding to the 30S ribosomal subunits. Also involved in the hydrolysis of GTP during the formation of the 70S ribosomal complex. This is Translation initiation factor IF-2 from Buchnera aphidicola subsp. Schizaphis graminum (strain Sg).